The sequence spans 106 residues: Tubulin-specific chaperone A (106 aa).

The residue at position 94 (Ser94) is a Phosphoserine.

This sequence belongs to the TBCA family.

The protein resides in the cytoplasm. It is found in the cytoskeleton. Tubulin-folding protein; involved in the early step of the tubulin folding pathway. The sequence is that of Tubulin-specific chaperone A (RBL2) from Saccharomyces cerevisiae (strain ATCC 204508 / S288c) (Baker's yeast).